The primary structure comprises 154 residues: Protein X (154 aa).

Residues 68–117 (PCALRFTSARCMETTVNAHQILPKVLHKRTLGLPAMSTTDLEAYFKDCVF) are mitochondrial targeting sequence.

Belongs to the orthohepadnavirus protein X family. May form homodimer. May interact with host CEBPA, CFLAR, CREB1, DDB1, E4F1, HBXIP, HSPD1/HSP60, NFKBIA, POLR2E and SMAD4. Interacts with host SMC5-SMC6 complex and induces its degradation. Interacts with host TRPC4AP; leading to prevent ubiquitination of TRPC4AP. Interacts with host PLSCR1; this interaction promotes ubiquitination and degradation of HBx and impairs HBx-mediated cell proliferation. A fraction may be phosphorylated in insect cells and HepG2 cells, a human hepatoblastoma cell line. Phosphorylated in vitro by host protein kinase C or mitogen-activated protein kinase. N-acetylated in insect cells.

It is found in the host cytoplasm. The protein localises to the host nucleus. The protein resides in the host mitochondrion. Multifunctional protein that plays a role in silencing host antiviral defenses and promoting viral transcription. Does not seem to be essential for HBV infection. May be directly involved in development of cirrhosis and liver cancer (hepatocellular carcinoma). Most of cytosolic activities involve modulation of cytosolic calcium. The effect on apoptosis is controversial depending on the cell types in which the studies have been conducted. May induce apoptosis by localizing in mitochondria and causing loss of mitochondrial membrane potential. May also modulate apoptosis by binding host CFLAR, a key regulator of the death-inducing signaling complex (DISC). Promotes viral transcription by using the host E3 ubiquitin ligase DDB1 to target the SMC5-SMC6 complex to proteasomal degradation. This host complex would otherwise bind to viral episomal DNA, and prevents its transcription. Moderately stimulates transcription of many different viral and cellular transcription elements. Promoters and enhancers stimulated by HBx contain DNA binding sites for NF-kappa-B, AP-1, AP-2, c-EBP, ATF/CREB, or the calcium-activated factor NF-AT. The sequence is that of Protein X from Homo sapiens (Human).